A 266-amino-acid chain; its full sequence is Undecaprenyl-diphosphatase (266 aa).

The next 8 membrane-spanning stretches (helical) occupy residues 4–24 (WLIALILGLIEGLTEFIPVSS), 46–66 (VLIQLGAILAITGVYFGRLWG), 82–102 (IGILLAFLPAVFVGVAAHDFI), 105–125 (VLYETPALVCSTLIIGGFILL), 142–162 (YPLKTAFIIGLFQCLALVPGV), 182–202 (AAEFSFFLAMPTMAGAFAYDL), 216–236 (LIGIGFLAALVSGVFVVKTVL), and 244–264 (FAPFAYWRIAVGVVGLALLYI).

Belongs to the UppP family.

The protein localises to the cell inner membrane. It carries out the reaction di-trans,octa-cis-undecaprenyl diphosphate + H2O = di-trans,octa-cis-undecaprenyl phosphate + phosphate + H(+). Its function is as follows. Catalyzes the dephosphorylation of undecaprenyl diphosphate (UPP). Confers resistance to bacitracin. This chain is Undecaprenyl-diphosphatase, found in Caulobacter vibrioides (strain ATCC 19089 / CIP 103742 / CB 15) (Caulobacter crescentus).